A 347-amino-acid chain; its full sequence is NADH-ubiquinone oxidoreductase chain 2 (347 aa).

11 helical membrane passes run 2–22, 25–45, 56–76, 96–116, 122–142, 149–169, 178–197, 202–219, 241–261, 278–298, and 326–346; these read SPYV…MTLI, HWLT…PLMT, AIKY…SAIF, FMMT…FWVP, IPLL…ISIF, LNMS…GWGG, ILAY…IMIY, ILNL…FMVL, MIII…TGFM, LAMM…RIIY, and IPTL…FITL.

It belongs to the complex I subunit 2 family.

The protein localises to the mitochondrion inner membrane. It catalyses the reaction a ubiquinone + NADH + 5 H(+)(in) = a ubiquinol + NAD(+) + 4 H(+)(out). Its function is as follows. Core subunit of the mitochondrial membrane respiratory chain NADH dehydrogenase (Complex I) that is believed to belong to the minimal assembly required for catalysis. Complex I functions in the transfer of electrons from NADH to the respiratory chain. The immediate electron acceptor for the enzyme is believed to be ubiquinone. This chain is NADH-ubiquinone oxidoreductase chain 2 (MT-ND2), found in Didelphis virginiana (North American opossum).